The chain runs to 124 residues: Small ribosomal subunit protein uS12c (124 aa).

Residues 104-124 (SGGVKDRTQRRSKYGVKKPKS) are disordered. Positions 113-124 (RRSKYGVKKPKS) are enriched in basic residues.

It belongs to the universal ribosomal protein uS12 family. Part of the 30S ribosomal subunit.

Its subcellular location is the plastid. The protein resides in the chloroplast. In terms of biological role, with S4 and S5 plays an important role in translational accuracy. Located at the interface of the 30S and 50S subunits. This Thalassiosira pseudonana (Marine diatom) protein is Small ribosomal subunit protein uS12c (rps12).